We begin with the raw amino-acid sequence, 95 residues long: UPF0045 protein CPE1503 (95 aa).

The protein belongs to the UPF0045 family.

The polypeptide is UPF0045 protein CPE1503 (Clostridium perfringens (strain 13 / Type A)).